The sequence spans 346 residues: NADH-quinone oxidoreductase subunit H (346 aa).

8 consecutive transmembrane segments (helical) span residues 6–26 (ILFW…ACAY), 76–96 (VMYL…WSVV), 128–148 (ILFL…AGWA), 166–186 (ISYE…SGSL), 198–218 (LWNI…VAMF), 260–280 (ITMS…PFGI), 289–309 (LFGL…FLWV), and 324–344 (LGWK…SIYI).

It belongs to the complex I subunit 1 family. As to quaternary structure, NDH-1 is composed of 14 different subunits. Subunits NuoA, H, J, K, L, M, N constitute the membrane sector of the complex.

Its subcellular location is the cell inner membrane. The catalysed reaction is a quinone + NADH + 5 H(+)(in) = a quinol + NAD(+) + 4 H(+)(out). In terms of biological role, NDH-1 shuttles electrons from NADH, via FMN and iron-sulfur (Fe-S) centers, to quinones in the respiratory chain. The immediate electron acceptor for the enzyme in this species is believed to be ubiquinone. Couples the redox reaction to proton translocation (for every two electrons transferred, four hydrogen ions are translocated across the cytoplasmic membrane), and thus conserves the redox energy in a proton gradient. This subunit may bind ubiquinone. The protein is NADH-quinone oxidoreductase subunit H of Leptospira interrogans serogroup Icterohaemorrhagiae serovar copenhageni (strain Fiocruz L1-130).